Here is a 282-residue protein sequence, read N- to C-terminus: Ribosome biogenesis GTPase A (282 aa).

The CP-type G domain maps to R14–P178. Residues N58–D61, N86–S87, N130–T135, and G174 contribute to the GTP site.

The protein belongs to the TRAFAC class YlqF/YawG GTPase family. MTG1 subfamily. As to quaternary structure, interacts with ctc. Interacts with the immature 50S ribosome subunit. 2 molecules of rbgA bind to one 50S subunit.

The protein resides in the cytoplasm. Its function is as follows. Essential protein that is required for a late step of 50S ribosomal subunit assembly. Has GTPase activity that is stimulated by interaction with the immature 50S ribosome subunit. Binds to the 23S rRNA. Required for the association of ribosomal proteins rplP and rpmA with the large subunit. The polypeptide is Ribosome biogenesis GTPase A (Bacillus pumilus (strain SAFR-032)).